The sequence spans 175 residues: Ribulose bisphosphate carboxylase small subunit, chloroplastic 2 (175 aa).

The N-terminal 46 residues, 1 to 46 (MAPAVMASSATTVAPFQGLKSTAGLPISCRSGSTGLSSVSNGGRIR), are a transit peptide targeting the chloroplast.

This sequence belongs to the RuBisCO small chain family. As to quaternary structure, heterohexadecamer of 8 large and 8 small subunits.

It is found in the plastid. The protein localises to the chloroplast. In terms of biological role, ruBisCO catalyzes two reactions: the carboxylation of D-ribulose 1,5-bisphosphate, the primary event in carbon dioxide fixation, as well as the oxidative fragmentation of the pentose substrate. Both reactions occur simultaneously and in competition at the same active site. Although the small subunit is not catalytic it is essential for maximal activity. The sequence is that of Ribulose bisphosphate carboxylase small subunit, chloroplastic 2 from Triticum aestivum (Wheat).